The primary structure comprises 204 residues: Somatotropin (204 aa).

The N-terminal stretch at 1 to 17 is a signal peptide; sequence MDRAVLLLSVLSLGVSS. Pyrrolidone carboxylic acid is present on glutamine 18. Histidine 35 serves as a coordination point for Zn(2+). An intrachain disulfide couples cysteine 69 to cysteine 177. Zn(2+) is bound at residue glutamate 186. Cysteine 194 and cysteine 202 are joined by a disulfide.

Belongs to the somatotropin/prolactin family.

The protein resides in the secreted. Growth hormone plays an important role in growth control and is involved in the regulation of several anabolic processes. Implicated as an osmoregulatory substance important for seawater adaptation. In Morone saxatilis (Striped bass), this protein is Somatotropin (gh).